The chain runs to 93 residues: MRLTILLIIIGLIGYIINSGPLGRTNIIKLFISIEIMLLGVTLLIILSGYNNDDILGLIIGIIVLIITGIESAIGLTILVNYYKIKGSLPTNI.

Helical transmembrane passes span 3–23 (LTILLIIIGLIGYIINSGPLG), 27–47 (IIKLFISIEIMLLGVTLLIIL), and 55–75 (ILGLIIGIIVLIITGIESAIG).

Belongs to the complex I subunit 4L family.

The protein resides in the mitochondrion membrane. It catalyses the reaction a ubiquinone + NADH + 5 H(+)(in) = a ubiquinol + NAD(+) + 4 H(+)(out). Its function is as follows. Core subunit of the mitochondrial membrane respiratory chain NADH dehydrogenase (Complex I) that is believed to belong to the minimal assembly required for catalysis. Complex I functions in the transfer of electrons from NADH to the respiratory chain. The immediate electron acceptor for the enzyme is believed to be ubiquinone. This is NADH-ubiquinone oxidoreductase chain 4L (ND4L) from Wickerhamomyces canadensis (Yeast).